Here is a 265-residue protein sequence, read N- to C-terminus: Palmitoyltransferase ZDHHC21 (265 aa).

Over 1 to 16 (MGLRIHFVVDPHGWCC) the chain is Cytoplasmic. The helical transmembrane segment at 17–37 (MGLIVFVWLYNIVIIPKIVLF) threads the bilayer. Topologically, residues 38–44 (PHYEEGH) are extracellular. The chain crosses the membrane as a helical span at residues 45-65 (IPGILIIIFYGISIFCLVALV). Residues 66–133 (RASLTDPGRL…NNCVGEDNHW (68 aa)) lie on the Cytoplasmic side of the membrane. In terms of domain architecture, DHHC spans 90-140 (ELCNKCNLMRPKRSHHCSRCGHCVRRMDHHCPWINNCVGEDNHWLFLQLCF). The active-site S-palmitoyl cysteine intermediate is cysteine 120. The chain crosses the membrane as a helical span at residues 134-154 (LFLQLCFYTELLTCYALMFSF). The Extracellular portion of the chain corresponds to 155-185 (CHYYYFLPLKKRNLDLFVVRHELAIMRLAAF). Residues 186 to 206 (MGITMLVGITGLFYTQLIGII) form a helical membrane-spanning segment. The Cytoplasmic segment spans residues 207-265 (TDTTSIEKMSNCCEEISRPRKPWQQTFSEVFGTRWKILWFIPFRQRQPLRVPYHFANHV).

The protein belongs to the DHHC palmitoyltransferase family. As to expression, widely expressed. Expressed in Henle's layer within the hair bulb and the hair shaft cuticle (at protein level). Expression is limited to the post-mitotic lineages of inner root sheath (IRS) and cuticle.

It localises to the golgi apparatus membrane. Its subcellular location is the golgi apparatus. It is found in the cis-Golgi network membrane. The protein resides in the cell membrane. The enzyme catalyses L-cysteinyl-[protein] + hexadecanoyl-CoA = S-hexadecanoyl-L-cysteinyl-[protein] + CoA. Functionally, palmitoyltransferase that catalyzes the addition of palmitate onto various protein substrates. Palmitoylates sex steroid hormone receptors, including ESR1, PGR and AR, thereby regulating their targeting to the plasma membrane. This affects rapid intracellular signaling by sex hormones via ERK and AKT kinases and the generation of cAMP, but does not affect that mediated by their nuclear receptor. Palmitoylates FYN, regulates its localization in hair follicles and plays a key role in epidermal homeostasis and hair follicle differentiation. Through the palmitoylation of PLCB1 and the regulation of PLCB1 downstream signaling may indirectly regulate the function of the endothelial barrier and the adhesion of leukocytes to the endothelium. Also has a palmitoyltransferase activity toward ADRA1D, positively regulating its activity and expression and may thereby play a role in vascular contraction. May also palmitoylate eNOS and LCK. This is Palmitoyltransferase ZDHHC21 from Mus musculus (Mouse).